Consider the following 1430-residue polypeptide: FYVE, RhoGEF and PH domain-containing protein 6 (1430 aa).

Positions 1 to 36 (MTSAAEIKKPPVAPKPKFVVANNKPAPPPIAPKPDI) are disordered. Low complexity predominate over residues 15-24 (KPKFVVANNK). Serine 231 bears the Phosphoserine mark. The tract at residues 330 to 351 (CVDTPSESTEEPGNSDSSSSCL) is disordered. The span at 334 to 351 (PSESTEEPGNSDSSSSCL) shows a compositional bias: polar residues. At serine 515 the chain carries Phosphoserine. Residues 516–538 (EELLEKSSYPSSEEKSSEKSLER) are disordered. The span at 527–538 (SEEKSSEKSLER) shows a compositional bias: basic and acidic residues. Phosphoserine is present on residues serine 554, serine 605, serine 692, and serine 721. Disordered regions lie at residues 695-739 (NYSL…PYKS) and 800-869 (PDGQ…NGMK). A compositionally biased stretch (polar residues) spans 728–739 (SRESSSQAPYKS). The segment covering 831–847 (PSDEEEIINSSDEDDVS) has biased composition (acidic residues). Over residues 851–868 (SKGEPDPLEDKQDEDNGM) the composition is skewed to basic and acidic residues. One can recognise a DH domain in the interval 871-1060 (KVHHIAKEIM…IEVANHANDT (190 aa)). A PH 1 domain is found at 1089–1183 (VFLKEGILMK…WLEAISRAIE (95 aa)). Position 1197 is a phosphoserine (serine 1197). The FYVE-type zinc-finger motif lies at 1222–1281 (DTRATMCMICTSEFTLTWRRHHCRACGKIVCQACSSNKYGLDYLKNQPARVCEHCFQELQ). 8 residues coordinate Zn(2+): cysteine 1228, cysteine 1231, cysteine 1244, cysteine 1247, cysteine 1252, cysteine 1255, cysteine 1273, and cysteine 1276. One can recognise a PH 2 domain in the interval 1333-1429 (DSSMSGYLYR…WIEAFQEGTI (97 aa)).

It localises to the cytoplasm. The protein resides in the cytoskeleton. May activate CDC42, a member of the Ras-like family of Rho- and Rac proteins, by exchanging bound GDP for free GTP. May play a role in regulating the actin cytoskeleton and cell shape. The protein is FYVE, RhoGEF and PH domain-containing protein 6 (FGD6) of Homo sapiens (Human).